Reading from the N-terminus, the 306-residue chain is Agmatinase (306 aa).

6 residues coordinate Mn(2+): histidine 126, aspartate 149, histidine 151, aspartate 153, aspartate 230, and aspartate 232.

It belongs to the arginase family. Agmatinase subfamily. It depends on Mn(2+) as a cofactor.

It catalyses the reaction agmatine + H2O = urea + putrescine. It functions in the pathway amine and polyamine biosynthesis; putrescine biosynthesis via agmatine pathway; putrescine from agmatine: step 1/1. Functionally, catalyzes the formation of putrescine from agmatine. This is Agmatinase from Citrobacter koseri (strain ATCC BAA-895 / CDC 4225-83 / SGSC4696).